We begin with the raw amino-acid sequence, 1249 residues long: DNA-directed RNA polymerase subunit beta (1249 aa).

Belongs to the RNA polymerase beta chain family. As to quaternary structure, the RNAP catalytic core consists of 2 alpha, 1 beta, 1 beta' and 1 omega subunit. When a sigma factor is associated with the core the holoenzyme is formed, which can initiate transcription.

The enzyme catalyses RNA(n) + a ribonucleoside 5'-triphosphate = RNA(n+1) + diphosphate. Functionally, DNA-dependent RNA polymerase catalyzes the transcription of DNA into RNA using the four ribonucleoside triphosphates as substrates. This is DNA-directed RNA polymerase subunit beta from Clostridium botulinum (strain Eklund 17B / Type B).